Here is a 279-residue protein sequence, read N- to C-terminus: Proline-rich protein 23D1 (279 aa).

Disordered stretches follow at residues 1-60 (MYGY…PHLN) and 247-270 (LRPM…RPPS). Residues 15–33 (TEPQNDNEGETSLATTQMN) are compositionally biased toward polar residues.

This sequence belongs to the PRR23 family.

The polypeptide is Proline-rich protein 23D1 (PRR23D1) (Homo sapiens (Human)).